A 390-amino-acid polypeptide reads, in one-letter code: Serine/threonine/tyrosine-protein kinase HT1 (390 aa).

Positions 86–359 (LFIGNKFASG…GLPLTSHASL (274 aa)) constitute a Protein kinase domain. ATP contacts are provided by residues 92 to 100 (FASGAHSRI) and Lys-113. Asp-212 (proton acceptor) is an active-site residue.

The protein belongs to the protein kinase superfamily. Ser/Thr protein kinase family. Interacts with DTX56. Binds to MPK4 and MPK12. Associates to CBC1 and CBC2. Post-translationally, autophosphorylated. Mainly localizes in guard cells. Expressed at low level in leaves, stems, roots and flowers.

It is found in the cell membrane. It carries out the reaction L-seryl-[protein] + ATP = O-phospho-L-seryl-[protein] + ADP + H(+). It catalyses the reaction L-threonyl-[protein] + ATP = O-phospho-L-threonyl-[protein] + ADP + H(+). The enzyme catalyses L-tyrosyl-[protein] + ATP = O-phospho-L-tyrosyl-[protein] + ADP + H(+). Its activity is regulated as follows. Inhibited by MPK4 and MPK12. Serine/threonine/tyrosine kinase involved in the control of stomatal movement in response to CO(2). Functions as a major negative regulator of CO(2)-induced stomatal closing. Does not seem to be involved in stomatal closure in response to abscisic acid (ABA) or light. Involved in the control of red light-induced stomatal opening. Is epistatic to SRK2E/OST1 function during stomatal responses to red light and altered CO(2). Phosphorylates SRK2E/OST1 and GHR1 to prevents SRK2E/OST1- and GHR1-induced activation of SLAC1, thus preventing stomatal closure. Mediates the phosphorylation of CBC1 and CBC2. The protein is Serine/threonine/tyrosine-protein kinase HT1 of Arabidopsis thaliana (Mouse-ear cress).